We begin with the raw amino-acid sequence, 486 residues long: Probable transporter MCH1 (486 aa).

The Cytoplasmic segment spans residues 1-29 (MPLSKVEHYLSYHTRLLLPHVLSLQSSHR). Residues 30-50 (VAYIFSLLSAVSTGFITLISL) form a helical membrane-spanning segment. Topologically, residues 51–67 (YSQPWQKHLNYSSWQIN) are vacuolar. Asparagine 60 is a glycosylation site (N-linked (GlcNAc...) asparagine). A helical membrane pass occupies residues 68–88 (TIASMTNLGMYLTPPILGMIA). Over 89–93 (DSHGP) the chain is Cytoplasmic. Residues 94-114 (ITLSLLAIIGFIPSYSYLAYV) traverse the membrane as a helical segment. The Vacuolar portion of the chain corresponds to 115–133 (FNHPELSLGGNGDSSFNLS). Asparagine 131 is a glycosylation site (N-linked (GlcNAc...) asparagine). A helical membrane pass occupies residues 134 to 154 (IICFVFIGISTSALYFSALLT). Residues 155–163 (CTKLYPHTK) are Cytoplasmic-facing. The chain crosses the membrane as a helical span at residues 164 to 184 (LLSISLPTTCYGISSVVGSQL). The Vacuolar portion of the chain corresponds to 185–212 (LRIKWFWSSNASSSSSNSDLNLGRVFQT). N-linked (GlcNAc...) asparagine glycosylation occurs at asparagine 194. A helical membrane pass occupies residues 213 to 233 (FALVYVVIGLLAWIATSVVSL). At 234–279 (LHFNEEQDNQKRLDDQTDVEQSPLLERSNHVQEKFTQTMLRIFSDP) the chain is on the cytoplasmic side. Serine 255 is modified (phosphoserine). Residues 280-300 (VTYILAVSILLSLGPLEMFIA) form a helical membrane-spanning segment. Residues 301-320 (NMGSLTNLLVQLDAPTLSTK) are Vacuolar-facing. The chain crosses the membrane as a helical span at residues 321-343 (LLSTYALSSTFTRLLTGIVADFF). Residues 344 to 347 (AKKK) lie on the Cytoplasmic side of the membrane. A helical membrane pass occupies residues 348–368 (ISIKWILLTFLSLGVCAQLFL). Residues 369 to 385 (LKMTSSASPWGLVPTGS) lie on the Vacuolar side of the membrane. The chain crosses the membrane as a helical span at residues 386–406 (LVGIVYGGLFTVYPTLVLLVW). Topologically, residues 407 to 413 (GERSFGT) are cytoplasmic. Residues 414–434 (VYGSLLIAPAIGSMIFCMLYA) traverse the membrane as a helical segment. At 435-456 (KFYDSRCMSGGGDLRNPSCISA) the chain is on the vacuolar side. The helical transmembrane segment at 457 to 477 (VYKYSSIAFVVSAVLSAVVFW) threads the bilayer. The Cytoplasmic portion of the chain corresponds to 478 to 486 (KLKSRKLRI).

Belongs to the major facilitator superfamily.

The protein localises to the vacuole membrane. Probable transporter. Does not act in the transport of monocarboxylic acids across the plasma membrane. In Saccharomyces cerevisiae (strain ATCC 204508 / S288c) (Baker's yeast), this protein is Probable transporter MCH1 (MCH1).